Here is a 225-residue protein sequence, read N- to C-terminus: Uracil-DNA glycosylase (225 aa).

The Proton acceptor role is filled by aspartate 65.

It belongs to the uracil-DNA glycosylase (UDG) superfamily. UNG family.

The protein resides in the cytoplasm. It carries out the reaction Hydrolyzes single-stranded DNA or mismatched double-stranded DNA and polynucleotides, releasing free uracil.. Its function is as follows. Excises uracil residues from the DNA which can arise as a result of misincorporation of dUMP residues by DNA polymerase or due to deamination of cytosine. This Clostridium perfringens (strain SM101 / Type A) protein is Uracil-DNA glycosylase.